Here is a 201-residue protein sequence, read N- to C-terminus: Peptidyl-tRNA hydrolase (201 aa).

Tyrosine 14 provides a ligand contact to tRNA. Histidine 19 (proton acceptor) is an active-site residue. TRNA-binding residues include tyrosine 64, asparagine 66, and asparagine 113. The segment at 178 to 201 (PGPAMNRFNRKPEPPESGGEVAAK) is disordered.

The protein belongs to the PTH family. In terms of assembly, monomer.

The protein resides in the cytoplasm. It catalyses the reaction an N-acyl-L-alpha-aminoacyl-tRNA + H2O = an N-acyl-L-amino acid + a tRNA + H(+). Its function is as follows. Hydrolyzes ribosome-free peptidyl-tRNAs (with 1 or more amino acids incorporated), which drop off the ribosome during protein synthesis, or as a result of ribosome stalling. In terms of biological role, catalyzes the release of premature peptidyl moieties from peptidyl-tRNA molecules trapped in stalled 50S ribosomal subunits, and thus maintains levels of free tRNAs and 50S ribosomes. In Koribacter versatilis (strain Ellin345), this protein is Peptidyl-tRNA hydrolase.